The chain runs to 223 residues: Peptidyl-tRNA hydrolase (223 aa).

Tyr-16 contributes to the tRNA binding site. His-21 (proton acceptor) is an active-site residue. TRNA is bound by residues Phe-67, Asn-69, and Asn-113.

This sequence belongs to the PTH family. In terms of assembly, monomer.

The protein resides in the cytoplasm. The catalysed reaction is an N-acyl-L-alpha-aminoacyl-tRNA + H2O = an N-acyl-L-amino acid + a tRNA + H(+). Hydrolyzes ribosome-free peptidyl-tRNAs (with 1 or more amino acids incorporated), which drop off the ribosome during protein synthesis, or as a result of ribosome stalling. Functionally, catalyzes the release of premature peptidyl moieties from peptidyl-tRNA molecules trapped in stalled 50S ribosomal subunits, and thus maintains levels of free tRNAs and 50S ribosomes. This is Peptidyl-tRNA hydrolase from Helicobacter hepaticus (strain ATCC 51449 / 3B1).